Consider the following 298-residue polypeptide: Olfactory receptor 52Z1P (298 aa).

Topologically, residues 1-14 are extracellular; it reads MGIPGLEGLHTWIS. The chain crosses the membrane as a helical span at residues 15-35; the sequence is IPFSFMYIVAVAGNIFLIFLI. The Cytoplasmic portion of the chain corresponds to 36-43; it reads MTERSLHE. Residues 44–64 form a helical membrane-spanning segment; the sequence is PMYLFLSMLASADFLLATAAA. Residues 65–85 are Extracellular-facing; it reads PKVLAILWFHSMDISFGSCVS. C83 and C164 are oxidised to a cystine. The helical transmembrane segment at 86-106 threads the bilayer; the sequence is QMFFIHFIFVAESAILLAMAF. Residues 107-128 lie on the Cytoplasmic side of the membrane; it reads DRYVAICYPLRYTILTSSAVRK. The helical transmembrane segment at 129 to 149 threads the bilayer; that stretch reads IGIAAVVRSFFICCPFIFLVY. The Extracellular segment spans residues 150-178; it reads RLTYCGRNIIPHSYCEHIARLACGNINVN. The helical transmembrane segment at 179–199 threads the bilayer; that stretch reads IIYGLTVALLSTGLDIVLIII. Residues 200–223 lie on the Cytoplasmic side of the membrane; sequence SYTMILHSVFQISSWAARFKALST. A helical transmembrane segment spans residues 224–244; the sequence is CGSHICVIFMFYTPAFFSFLA. Residues 245–257 are Extracellular-facing; that stretch reads HRFGGKTIPHHIH. Residues 258 to 278 traverse the membrane as a helical segment; the sequence is ILVGSLYVLVPPMLNPIIYGV. Residues 279-298 lie on the Cytoplasmic side of the membrane; the sequence is KTKQIKDRVILLFSPISVCC.

Belongs to the G-protein coupled receptor 1 family.

The protein localises to the cell membrane. In terms of biological role, odorant receptor. In Homo sapiens (Human), this protein is Olfactory receptor 52Z1P.